A 432-amino-acid polypeptide reads, in one-letter code: uncharacterized protein (432 aa).

This is an uncharacterized protein from Methanocaldococcus jannaschii (strain ATCC 43067 / DSM 2661 / JAL-1 / JCM 10045 / NBRC 100440) (Methanococcus jannaschii).